A 50-amino-acid polypeptide reads, in one-letter code: Large ribosomal subunit protein bL33B (50 aa).

Belongs to the bacterial ribosomal protein bL33 family.

The sequence is that of Large ribosomal subunit protein bL33B from Mesomycoplasma hyopneumoniae (strain 7448) (Mycoplasma hyopneumoniae).